We begin with the raw amino-acid sequence, 95 residues long: UPF0213 protein PEPE_0875 (95 aa).

The GIY-YIG domain maps to 7–82; the sequence is NGFYFYVLRC…KQRTRSSKIK (76 aa).

Belongs to the UPF0213 family.

This Pediococcus pentosaceus (strain ATCC 25745 / CCUG 21536 / LMG 10740 / 183-1w) protein is UPF0213 protein PEPE_0875.